The sequence spans 518 residues: uncharacterized protein (518 aa).

ABC transporter domains are found at residues 4-260 and 324-518; these read LSVK…QLEA and LIFE…TKVL. ATP contacts are provided by residues 36-43 and 357-364; these read GANGEGKS and GANGIGKT.

The protein belongs to the ABC transporter superfamily.

This is an uncharacterized protein from Bacillus subtilis (strain 168).